Here is a 538-residue protein sequence, read N- to C-terminus: ATP synthase subunit beta 2 (538 aa).

Residues 1–10 are compositionally biased toward polar residues; the sequence is MADPQATNGT. Residues 1–30 form a disordered region; it reads MADPQATNGTGAACAERDASDVGDVSDVGD. ATP is bound at residue 185–192; sequence GGAGVGKT. Residues 494–505 are compositionally biased toward basic and acidic residues; sequence AAAREADARREA. A disordered region spans residues 494–538; the sequence is AAAREADARREAAAAASVAGPGTTSGTTSDPASGSAEPQGARHGR. The segment covering 506-529 has biased composition (low complexity); sequence AAAASVAGPGTTSGTTSDPASGSA.

The protein belongs to the ATPase alpha/beta chains family. In terms of assembly, F-type ATPases have 2 components, CF(1) - the catalytic core - and CF(0) - the membrane proton channel. CF(1) has five subunits: alpha(3), beta(3), gamma(1), delta(1), epsilon(1). CF(0) has three main subunits: a(1), b(2) and c(9-12). The alpha and beta chains form an alternating ring which encloses part of the gamma chain. CF(1) is attached to CF(0) by a central stalk formed by the gamma and epsilon chains, while a peripheral stalk is formed by the delta and b chains.

The protein resides in the cell inner membrane. It catalyses the reaction ATP + H2O + 4 H(+)(in) = ADP + phosphate + 5 H(+)(out). In terms of biological role, produces ATP from ADP in the presence of a proton gradient across the membrane. The catalytic sites are hosted primarily by the beta subunits. The chain is ATP synthase subunit beta 2 from Burkholderia pseudomallei (strain K96243).